Here is a 483-residue protein sequence, read N- to C-terminus: SET domain and MYND-type zinc finger protein 6 (483 aa).

Positions 4–228 (PLIASVILPE…KDEQLFISYI (225 aa)) constitute an SET domain. Residues Cys49, Cys52, Cys62, Cys65, Cys71, Cys75, His83, and Cys87 each contribute to the Zn(2+) site. The segment at 49 to 87 (CSTCTEEKVKTQRCAACKIIHYCSKGCQKADWPFHKLEC) adopts an MYND-type zinc-finger fold.

This sequence belongs to the class V-like SAM-binding methyltransferase superfamily.

The protein resides in the cytoplasm. It is found in the nucleus. The sequence is that of SET domain and MYND-type zinc finger protein 6 (set6) from Schizosaccharomyces pombe (strain 972 / ATCC 24843) (Fission yeast).